The following is a 251-amino-acid chain: MRKPLIAGNWKMNKTDGETKQFINDLKCLDISDNVEACIISPFTSLKTLTEDLRNSNISTGAQNMYYEECGAFTGEVSPNMLKDLGIDYVIIGHSERRTIFKEDDELLNKKIASALKHDIKPILCCGENLEQRESNRHEEVVESQIRLDLKGINEKDIMSKLVIAYEPIWAIGTGKTASSDDAQSMCKFIRNLLSKMYSKDLADSVRIQYGGSVKPENILDIMSKEDIDGALVGGASLEAESFSKLINYGK.

9-11 provides a ligand contact to substrate; sequence NWK. Residue H94 is the Electrophile of the active site. The Proton acceptor role is filled by E167. Substrate-binding positions include G173, S213, and 234–235; that span reads GG.

It belongs to the triosephosphate isomerase family. As to quaternary structure, homodimer.

The protein resides in the cytoplasm. It catalyses the reaction D-glyceraldehyde 3-phosphate = dihydroxyacetone phosphate. Its pathway is carbohydrate biosynthesis; gluconeogenesis. The protein operates within carbohydrate degradation; glycolysis; D-glyceraldehyde 3-phosphate from glycerone phosphate: step 1/1. Involved in the gluconeogenesis. Catalyzes stereospecifically the conversion of dihydroxyacetone phosphate (DHAP) to D-glyceraldehyde-3-phosphate (G3P). This is Triosephosphate isomerase from Finegoldia magna (strain ATCC 29328 / DSM 20472 / WAL 2508) (Peptostreptococcus magnus).